The chain runs to 141 residues: Nucleoside diphosphate kinase (141 aa).

Residues lysine 11, phenylalanine 59, arginine 87, threonine 93, arginine 104, and asparagine 114 each contribute to the ATP site. Histidine 117 functions as the Pros-phosphohistidine intermediate in the catalytic mechanism.

It belongs to the NDK family. As to quaternary structure, homotetramer. Requires Mg(2+) as cofactor.

Its subcellular location is the cytoplasm. The enzyme catalyses a 2'-deoxyribonucleoside 5'-diphosphate + ATP = a 2'-deoxyribonucleoside 5'-triphosphate + ADP. The catalysed reaction is a ribonucleoside 5'-diphosphate + ATP = a ribonucleoside 5'-triphosphate + ADP. Major role in the synthesis of nucleoside triphosphates other than ATP. The ATP gamma phosphate is transferred to the NDP beta phosphate via a ping-pong mechanism, using a phosphorylated active-site intermediate. The chain is Nucleoside diphosphate kinase from Cupriavidus taiwanensis (strain DSM 17343 / BCRC 17206 / CCUG 44338 / CIP 107171 / LMG 19424 / R1) (Ralstonia taiwanensis (strain LMG 19424)).